We begin with the raw amino-acid sequence, 175 residues long: Interferon gamma (175 aa).

A signal peptide spans 1–23; sequence MNATCCILALLLCLTQAISGCYC. Pyrrolidone carboxylic acid is present on glutamine 24. N-linked (GlcNAc...) asparagine glycosylation is found at asparagine 39 and asparagine 106.

The protein belongs to the type II (or gamma) interferon family. Homodimer. Interacts with IFNGR1 (via extracellular domain); this interaction promotes IFNGR1 dimerization. Released primarily from activated T lymphocytes.

The protein resides in the secreted. Type II interferon produced by immune cells such as T-cells and NK cells that plays crucial roles in antimicrobial, antiviral, and antitumor responses by activating effector immune cells and enhancing antigen presentation. Primarily signals through the JAK-STAT pathway after interaction with its receptor IFNGR1 to affect gene regulation. Upon IFNG binding, IFNGR1 intracellular domain opens out to allow association of downstream signaling components JAK2, JAK1 and STAT1, leading to STAT1 activation, nuclear translocation and transcription of IFNG-regulated genes. Many of the induced genes are transcription factors such as IRF1 that are able to further drive regulation of a next wave of transcription. Plays a role in class I antigen presentation pathway by inducing a replacement of catalytic proteasome subunits with immunoproteasome subunits. In turn, increases the quantity, quality, and repertoire of peptides for class I MHC loading. Increases the efficiency of peptide generation also by inducing the expression of activator PA28 that associates with the proteasome and alters its proteolytic cleavage preference. Up-regulates as well MHC II complexes on the cell surface by promoting expression of several key molecules such as cathepsins B/CTSB, H/CTSH, and L/CTSL. Participates in the regulation of hematopoietic stem cells during development and under homeostatic conditions by affecting their development, quiescence, and differentiation. The chain is Interferon gamma (IFNG) from Peromyscus maniculatus (North American deer mouse).